The following is a 544-amino-acid chain: Glucose starvation modulator protein 1 (544 aa).

The segment at residues 20-48 (CVFCHSKHLQCSNERPCKNCMKRNLGDQC) is a DNA-binding region (zn(2)-C6 fungal-type). The disordered stretch occupies residues 65 to 93 (KKMKSRTNSISSSYRSPSVSESPQNPYTH). The span at 70–86 (RTNSISSSYRSPSVSES) shows a compositional bias: low complexity. One can recognise a PAS domain in the interval 403 to 475 (SLIDYEKLLL…FKLFKSVAVG (73 aa)).

It belongs to the ERT1/acuK family.

The protein resides in the nucleus. Transcription factor which regulates nonfermentable carbon utilization. This chain is Glucose starvation modulator protein 1 (GSM1), found in Debaryomyces hansenii (strain ATCC 36239 / CBS 767 / BCRC 21394 / JCM 1990 / NBRC 0083 / IGC 2968) (Yeast).